A 694-amino-acid chain; its full sequence is Elongation factor G (694 aa).

Residues Glu-8 to Thr-287 form the tr-type G domain. GTP is bound by residues Ala-17–Thr-24, Asp-86–His-90, and Asn-140–Asp-143.

The protein belongs to the TRAFAC class translation factor GTPase superfamily. Classic translation factor GTPase family. EF-G/EF-2 subfamily.

The protein resides in the cytoplasm. Catalyzes the GTP-dependent ribosomal translocation step during translation elongation. During this step, the ribosome changes from the pre-translocational (PRE) to the post-translocational (POST) state as the newly formed A-site-bound peptidyl-tRNA and P-site-bound deacylated tRNA move to the P and E sites, respectively. Catalyzes the coordinated movement of the two tRNA molecules, the mRNA and conformational changes in the ribosome. The sequence is that of Elongation factor G from Brucella anthropi (strain ATCC 49188 / DSM 6882 / CCUG 24695 / JCM 21032 / LMG 3331 / NBRC 15819 / NCTC 12168 / Alc 37) (Ochrobactrum anthropi).